The sequence spans 426 residues: Selenate reductase subunit C (426 aa).

The next 10 membrane-spanning stretches (helical) occupy residues 5–25, 40–60, 78–98, 119–139, 187–207, 223–243, 261–281, 302–322, 330–350, and 385–405; these read LYFT…YIRL, WGLW…SFLL, LALF…LIDL, WEIQ…WFLM, ILGI…GSLF, IIFL…LYSF, LLTL…LIGL, FIFW…LITI, MGLA…ILVI, and VGLI…VPVF.

Belongs to the NrfD family. As to quaternary structure, the complex is composed of three subunits: SrdA, SrdB and SrdC.

Its subcellular location is the cell membrane. The enzyme catalyses selenite + a quinone + H2O = selenate + a quinol. Its function is as follows. Component of the respiratory selenate reductase complex, which catalyzes the reduction of selenate to selenite. This subunit probably receives electrons directly from the membrane quinone pool and transfers the electrons to the iron-sulfur clusters of SrdB. May be the membrane anchor protein subunit of the complex. This chain is Selenate reductase subunit C, found in Mesobacillus selenatarsenatis (strain DSM 18680 / JCM 14380 / FERM P-15431 / SF-1).